A 596-amino-acid polypeptide reads, in one-letter code: Elongation factor 4 (596 aa).

One can recognise a tr-type G domain in the interval 2 to 184 (KHIRNFSIIA…TIVAQIPSPE (183 aa)). Residues 14 to 19 (DHGKST) and 131 to 134 (NKID) contribute to the GTP site.

It belongs to the TRAFAC class translation factor GTPase superfamily. Classic translation factor GTPase family. LepA subfamily.

It localises to the cell inner membrane. The enzyme catalyses GTP + H2O = GDP + phosphate + H(+). Required for accurate and efficient protein synthesis under certain stress conditions. May act as a fidelity factor of the translation reaction, by catalyzing a one-codon backward translocation of tRNAs on improperly translocated ribosomes. Back-translocation proceeds from a post-translocation (POST) complex to a pre-translocation (PRE) complex, thus giving elongation factor G a second chance to translocate the tRNAs correctly. Binds to ribosomes in a GTP-dependent manner. The sequence is that of Elongation factor 4 from Shewanella amazonensis (strain ATCC BAA-1098 / SB2B).